A 58-amino-acid polypeptide reads, in one-letter code: Photosystem II reaction center protein K (58 aa).

The propeptide occupies 1–21; sequence MLNMISTFFDSSSNFSEAFLA. A helical membrane pass occupies residues 29-49; that stretch reads IFDPIVDVMPIIPVFFLLLAF.

Belongs to the PsbK family. In terms of assembly, PSII is composed of 1 copy each of membrane proteins PsbA, PsbB, PsbC, PsbD, PsbE, PsbF, PsbH, PsbI, PsbJ, PsbK, PsbL, PsbM, PsbT, PsbX, PsbY, PsbZ, Psb30/Ycf12, at least 3 peripheral proteins of the oxygen-evolving complex and a large number of cofactors. It forms dimeric complexes.

It is found in the plastid. The protein localises to the chloroplast thylakoid membrane. Its function is as follows. One of the components of the core complex of photosystem II (PSII). PSII is a light-driven water:plastoquinone oxidoreductase that uses light energy to abstract electrons from H(2)O, generating O(2) and a proton gradient subsequently used for ATP formation. It consists of a core antenna complex that captures photons, and an electron transfer chain that converts photonic excitation into a charge separation. The chain is Photosystem II reaction center protein K from Chaetosphaeridium globosum (Charophycean green alga).